Here is a 396-residue protein sequence, read N- to C-terminus: Acetylornithine aminotransferase 2 (396 aa).

Pyridoxal 5'-phosphate-binding positions include 102 to 103 and Phe-134; that span reads GA. Residue Arg-137 coordinates N(2)-acetyl-L-ornithine. Pyridoxal 5'-phosphate is bound at residue 219-222; that stretch reads DEVQ. The residue at position 248 (Lys-248) is an N6-(pyridoxal phosphate)lysine. Thr-276 contributes to the pyridoxal 5'-phosphate binding site.

Belongs to the class-III pyridoxal-phosphate-dependent aminotransferase family. ArgD subfamily. Homodimer. Requires pyridoxal 5'-phosphate as cofactor.

The protein resides in the cytoplasm. The enzyme catalyses N(2)-acetyl-L-ornithine + 2-oxoglutarate = N-acetyl-L-glutamate 5-semialdehyde + L-glutamate. It functions in the pathway amino-acid biosynthesis; L-arginine biosynthesis; N(2)-acetyl-L-ornithine from L-glutamate: step 4/4. This Bordetella bronchiseptica (strain ATCC BAA-588 / NCTC 13252 / RB50) (Alcaligenes bronchisepticus) protein is Acetylornithine aminotransferase 2.